The primary structure comprises 215 residues: Orotate phosphoribosyltransferase (215 aa).

Lys-26 provides a ligand contact to 5-phospho-alpha-D-ribose 1-diphosphate. Residue 34–35 (FF) participates in orotate binding. 5-phospho-alpha-D-ribose 1-diphosphate is bound by residues 72-73 (YK), Arg-99, Lys-100, Lys-103, His-105, and 124-132 (DDVITAGTA). The orotate site is built by Thr-128 and Arg-156.

It belongs to the purine/pyrimidine phosphoribosyltransferase family. PyrE subfamily. As to quaternary structure, homodimer. Requires Mg(2+) as cofactor.

It catalyses the reaction orotidine 5'-phosphate + diphosphate = orotate + 5-phospho-alpha-D-ribose 1-diphosphate. It participates in pyrimidine metabolism; UMP biosynthesis via de novo pathway; UMP from orotate: step 1/2. In terms of biological role, catalyzes the transfer of a ribosyl phosphate group from 5-phosphoribose 1-diphosphate to orotate, leading to the formation of orotidine monophosphate (OMP). This Hahella chejuensis (strain KCTC 2396) protein is Orotate phosphoribosyltransferase.